The chain runs to 443 residues: Acid phosphatase type 7 (443 aa).

The N-terminal stretch at 1 to 23 is a signal peptide; the sequence is MAAAPPPPPPLLLLLLCVCAVFA. N-linked (GlcNAc...) asparagine glycosylation is found at Asn53, Asn76, and Asn126. Positions 140, 169, and 172 each coordinate Fe cation. Residue Asp169 coordinates Zn(2+). Asn204 contributes to the Zn(2+) binding site. The N-linked (GlcNAc...) asparagine glycan is linked to Asn210. Position 288 (His288) interacts with Zn(2+). The N-linked (GlcNAc...) asparagine glycan is linked to Asn313. A Zn(2+)-binding site is contributed by His338. Fe cation is bound at residue His340. 2 N-linked (GlcNAc...) asparagine glycosylation sites follow: Asn355 and Asn409.

This sequence belongs to the metallophosphoesterase superfamily. Purple acid phosphatase family. Requires Fe cation as cofactor. Zn(2+) is required as a cofactor.

It localises to the secreted. The enzyme catalyses a phosphate monoester + H2O = an alcohol + phosphate. This is Acid phosphatase type 7 from Danio rerio (Zebrafish).